We begin with the raw amino-acid sequence, 260 residues long: Snake venom serine protease 2 (260 aa).

The signal sequence occupies residues 1–18; the sequence is MVLIRVLANLLILQLFYA. Residues 19–24 constitute a propeptide that is removed on maturation; that stretch reads QKSSEL. The Peptidase S1 domain occupies 25-251; that stretch reads IIGGDECNIN…HLDWIKSIIA (227 aa). Disulfide bonds link cysteine 31/cysteine 165, cysteine 52/cysteine 68, cysteine 100/cysteine 258, cysteine 144/cysteine 212, cysteine 176/cysteine 191, and cysteine 202/cysteine 227. 2 N-linked (GlcNAc...) asparagine glycosylation sites follow: asparagine 123 and asparagine 124.

It belongs to the peptidase S1 family. Snake venom subfamily. As to quaternary structure, monomer. As to expression, expressed by the venom gland.

The protein localises to the secreted. Its function is as follows. Snake venom serine protease that may act in the hemostasis system of the prey. The polypeptide is Snake venom serine protease 2 (TLF2) (Protobothrops flavoviridis (Habu)).